A 139-amino-acid polypeptide reads, in one-letter code: Aspartate 1-decarboxylase (139 aa).

The active-site Schiff-base intermediate with substrate; via pyruvic acid is S25. Pyruvic acid (Ser) is present on S25. T57 contacts substrate. Y58 serves as the catalytic Proton donor. 73–75 serves as a coordination point for substrate; that stretch reads GAA. The disordered stretch occupies residues 116–139; it reads ELGSDPAHAPEGSGLTSPRSLTFA. A compositionally biased stretch (polar residues) spans 129–139; sequence GLTSPRSLTFA.

Belongs to the PanD family. In terms of assembly, heterooctamer of four alpha and four beta subunits. Pyruvate serves as cofactor. Post-translationally, is synthesized initially as an inactive proenzyme, which is activated by self-cleavage at a specific serine bond to produce a beta-subunit with a hydroxyl group at its C-terminus and an alpha-subunit with a pyruvoyl group at its N-terminus.

The protein localises to the cytoplasm. It carries out the reaction L-aspartate + H(+) = beta-alanine + CO2. The protein operates within cofactor biosynthesis; (R)-pantothenate biosynthesis; beta-alanine from L-aspartate: step 1/1. Its function is as follows. Catalyzes the pyruvoyl-dependent decarboxylation of aspartate to produce beta-alanine. The sequence is that of Aspartate 1-decarboxylase from Nocardia farcinica (strain IFM 10152).